We begin with the raw amino-acid sequence, 159 residues long: Phosphopantetheine adenylyltransferase (159 aa).

S8 contributes to the substrate binding site. ATP-binding positions include 8–9 (SF) and H16. K40, V72, and R86 together coordinate substrate. ATP is bound by residues 87–89 (GVR), E97, and 122–128 (YAALRSS).

It belongs to the bacterial CoaD family. In terms of assembly, homohexamer. It depends on Mg(2+) as a cofactor.

It localises to the cytoplasm. It carries out the reaction (R)-4'-phosphopantetheine + ATP + H(+) = 3'-dephospho-CoA + diphosphate. It participates in cofactor biosynthesis; coenzyme A biosynthesis; CoA from (R)-pantothenate: step 4/5. Reversibly transfers an adenylyl group from ATP to 4'-phosphopantetheine, yielding dephospho-CoA (dPCoA) and pyrophosphate. This Treponema pallidum (strain Nichols) protein is Phosphopantetheine adenylyltransferase.